Reading from the N-terminus, the 209-residue chain is Large ribosomal subunit protein uL3 (209 aa).

Glutamine 150 is modified (N5-methylglutamine).

Belongs to the universal ribosomal protein uL3 family. As to quaternary structure, part of the 50S ribosomal subunit. Forms a cluster with proteins L14 and L19. Post-translationally, methylated by PrmB.

Functionally, one of the primary rRNA binding proteins, it binds directly near the 3'-end of the 23S rRNA, where it nucleates assembly of the 50S subunit. This Klebsiella pneumoniae (strain 342) protein is Large ribosomal subunit protein uL3.